An 89-amino-acid chain; its full sequence is Small cysteine-rich protein 1 (89 aa).

The first 20 residues, methionine 1–alanine 20, serve as a signal peptide directing secretion. Residues asparagine 21 to glutamate 27 constitute a propeptide that is removed on maturation.

It belongs to the Cnidaria small cysteine-rich protein (SCRiP) family. gamma subfamily. Post-translationally, contains 4 disulfide bonds.

It localises to the secreted. The protein localises to the nematocyst. Induces neurotoxic symptoms on zebrafish. Has also been claimed to be implied in calcification, but tests on homolog proteins suggest that proteins of this family have a neurotoxic function and not a calcification function. The chain is Small cysteine-rich protein 1 from Acropora millepora (Staghorn coral).